Here is a 132-residue protein sequence, read N- to C-terminus: Small ribosomal subunit protein uS8 (132 aa).

It belongs to the universal ribosomal protein uS8 family. As to quaternary structure, part of the 30S ribosomal subunit. Contacts proteins S5 and S12.

In terms of biological role, one of the primary rRNA binding proteins, it binds directly to 16S rRNA central domain where it helps coordinate assembly of the platform of the 30S subunit. This chain is Small ribosomal subunit protein uS8, found in Arthrobacter sp. (strain FB24).